A 299-amino-acid polypeptide reads, in one-letter code: GTP cyclohydrolase FolE2 (299 aa).

The protein belongs to the GTP cyclohydrolase IV family.

It carries out the reaction GTP + H2O = 7,8-dihydroneopterin 3'-triphosphate + formate + H(+). The protein operates within cofactor biosynthesis; 7,8-dihydroneopterin triphosphate biosynthesis; 7,8-dihydroneopterin triphosphate from GTP: step 1/1. Converts GTP to 7,8-dihydroneopterin triphosphate. The polypeptide is GTP cyclohydrolase FolE2 (Klebsiella pneumoniae).